Here is a 347-residue protein sequence, read N- to C-terminus: GMP reductase (347 aa).

108–131 (ADFEKTKQILDLNPALNFVCIDVA) provides a ligand contact to NADP(+). Gly181 and Gly183 together coordinate K(+). Catalysis depends on Cys186, which acts as the Thioimidate intermediate. 216–239 (IISDGGCTTPGDVAKAFGGGADFV) is an NADP(+) binding site.

It belongs to the IMPDH/GMPR family. GuaC type 1 subfamily. As to quaternary structure, homotetramer.

The catalysed reaction is IMP + NH4(+) + NADP(+) = GMP + NADPH + 2 H(+). In terms of biological role, catalyzes the irreversible NADPH-dependent deamination of GMP to IMP. It functions in the conversion of nucleobase, nucleoside and nucleotide derivatives of G to A nucleotides, and in maintaining the intracellular balance of A and G nucleotides. The sequence is that of GMP reductase from Escherichia coli O157:H7.